An 899-amino-acid polypeptide reads, in one-letter code: Alanine--tRNA ligase, chloroplastic/mitochondrial (899 aa).

Zn(2+) contacts are provided by His581, His585, Cys683, and His687.

The protein belongs to the class-II aminoacyl-tRNA synthetase family. Monomer. The cofactor is Zn(2+).

The protein resides in the plastid. It is found in the chloroplast. It localises to the mitochondrion. It catalyses the reaction tRNA(Ala) + L-alanine + ATP = L-alanyl-tRNA(Ala) + AMP + diphosphate. Catalyzes the attachment of alanine to tRNA(Ala) in a two-step reaction: alanine is first activated by ATP to form Ala-AMP and then transferred to the acceptor end of tRNA(Ala). Also edits incorrectly charged tRNA(Ala) via its editing domain. The chain is Alanine--tRNA ligase, chloroplastic/mitochondrial from Micromonas pusilla (strain CCMP1545) (Picoplanktonic green alga).